The following is a 294-amino-acid chain: Nucleotide-binding protein Daud_0300 (294 aa).

Position 11–18 (11–18 (GLSGAGKT)) interacts with ATP. 62–65 (DIRG) contacts GTP.

This sequence belongs to the RapZ-like family.

Functionally, displays ATPase and GTPase activities. This is Nucleotide-binding protein Daud_0300 from Desulforudis audaxviator (strain MP104C).